We begin with the raw amino-acid sequence, 239 residues long: LexA repressor (239 aa).

A DNA-binding region (H-T-H motif) is located at residues 26-46 (FDEMKDALDLASKSGIHRLIT). The segment at 80–108 (RRGFSPSVIEGSLGKPQPAAAPAPAKPVA) is disordered. Residues Ser159 and Lys197 each act as for autocatalytic cleavage activity in the active site.

Belongs to the peptidase S24 family. In terms of assembly, homodimer.

The enzyme catalyses Hydrolysis of Ala-|-Gly bond in repressor LexA.. Functionally, represses a number of genes involved in the response to DNA damage (SOS response), including recA and lexA. In the presence of single-stranded DNA, RecA interacts with LexA causing an autocatalytic cleavage which disrupts the DNA-binding part of LexA, leading to derepression of the SOS regulon and eventually DNA repair. This chain is LexA repressor, found in Rhizobium leguminosarum bv. trifolii (strain WSM2304).